Here is a 39-residue protein sequence, read N- to C-terminus: Omega-theraphotoxin-Asp1a (39 aa).

3 disulfide bridges follow: cysteine 4–cysteine 25, cysteine 8–cysteine 31, and cysteine 17–cysteine 36.

In terms of tissue distribution, expressed by the venom gland.

The protein resides in the secreted. In terms of biological role, toxin that inhibits voltage-gated calcium channels in rat cerebellar granule cells (IC(50)&lt;200 nM). Is lethal to cockroaches. The chain is Omega-theraphotoxin-Asp1a from Aphonopelma sp. (American tarantula).